The chain runs to 672 residues: Probable urocanate hydratase (672 aa).

Residues 128–129 (GG), glutamine 206, 253–255 (GMS), glutamate 273, 318–319 (NV), 340–344 (QTSLH), 351–352 (YY), tyrosine 400, and glycine 592 contribute to the NAD(+) site.

This sequence belongs to the urocanase family. NAD(+) is required as a cofactor.

The catalysed reaction is 4-imidazolone-5-propanoate = trans-urocanate + H2O. Its pathway is amino-acid degradation; L-histidine degradation into L-glutamate; N-formimidoyl-L-glutamate from L-histidine: step 2/3. This Dictyostelium discoideum (Social amoeba) protein is Probable urocanate hydratase (uroc1).